Here is a 545-residue protein sequence, read N- to C-terminus: Delta 8-(E)-sphingolipid desaturase (545 aa).

Residues M1–Q82 enclose the Cytochrome b5 heme-binding domain. 2 residues coordinate heme: H42 and H65. Residues F97–A124 are disordered. Residues L227–S247 traverse the membrane as a helical segment. Positions H249–H253 match the Histidine box-1 motif. The helical transmembrane segment at V262 to W282 threads the bilayer. A Histidine box-2 motif is present at residues H286–H290. 2 helical membrane-spanning segments follow: residues I382–P402 and L408–S428. The Histidine box-3 signature appears at Q470–H474.

Belongs to the fatty acid desaturase type 1 family.

It localises to the membrane. The catalysed reaction is an N-acylsphing-4-enine + 2 Fe(II)-[cytochrome b5] + O2 + 2 H(+) = a (4E,8E)-4-sphinga-4,8-dienine ceramide + 2 Fe(III)-[cytochrome b5] + 2 H2O. It functions in the pathway lipid metabolism; sphingolipid metabolism. Functionally, delta(8)-fatty-acid desaturase which introduces a double bond at the 8-position in the long-chain base (LCB) of ceramides. Required for the formation of the di-unsaturated sphingoid base (E,E)-sphinga-4,8-dienine during glucosylceramide (GluCer) biosynthesis. Plays an important role in conidiation. This chain is Delta 8-(E)-sphingolipid desaturase, found in Emericella nidulans (strain FGSC A4 / ATCC 38163 / CBS 112.46 / NRRL 194 / M139) (Aspergillus nidulans).